The sequence spans 405 residues: Argininosuccinate synthase (405 aa).

Residues 10 to 18 (AYSGGLDTS) and Ala37 contribute to the ATP site. L-citrulline is bound by residues Tyr88 and Ser93. Residue Gly118 coordinates ATP. The L-aspartate site is built by Thr120, Asn124, and Asp125. Asn124 provides a ligand contact to L-citrulline. Residues Arg128, Ser179, Ser188, Glu264, and Tyr276 each contribute to the L-citrulline site.

It belongs to the argininosuccinate synthase family. Type 1 subfamily. In terms of assembly, homotetramer.

It localises to the cytoplasm. The enzyme catalyses L-citrulline + L-aspartate + ATP = 2-(N(omega)-L-arginino)succinate + AMP + diphosphate + H(+). It participates in amino-acid biosynthesis; L-arginine biosynthesis; L-arginine from L-ornithine and carbamoyl phosphate: step 2/3. This is Argininosuccinate synthase from Pseudomonas aeruginosa (strain LESB58).